Consider the following 177-residue polypeptide: tRNA-splicing endonuclease (177 aa).

Residues Tyr114, His123, and Lys154 contribute to the active site.

The protein belongs to the tRNA-intron endonuclease family. Archaeal short subfamily. Homotetramer; although the tetramer contains four active sites, only two participate in the cleavage. Therefore, it should be considered as a dimer of dimers.

The enzyme catalyses pretRNA = a 3'-half-tRNA molecule with a 5'-OH end + a 5'-half-tRNA molecule with a 2',3'-cyclic phosphate end + an intron with a 2',3'-cyclic phosphate and a 5'-hydroxyl terminus.. Its function is as follows. Endonuclease that removes tRNA introns. Cleaves pre-tRNA at the 5'- and 3'-splice sites to release the intron. The products are an intron and two tRNA half-molecules bearing 2',3' cyclic phosphate and 5'-OH termini. Recognizes a pseudosymmetric substrate in which 2 bulged loops of 3 bases are separated by a stem of 4 bp. The protein is tRNA-splicing endonuclease of Methanococcus maripaludis (strain DSM 14266 / JCM 13030 / NBRC 101832 / S2 / LL).